Reading from the N-terminus, the 227-residue chain is Ribose-5-phosphate isomerase A (227 aa).

Substrate-binding positions include 26 to 29 (TGST), 82 to 85 (DGAD), and 95 to 98 (KGGG). Catalysis depends on Glu104, which acts as the Proton acceptor. A substrate-binding site is contributed by Lys122.

It belongs to the ribose 5-phosphate isomerase family. Homodimer.

The enzyme catalyses aldehydo-D-ribose 5-phosphate = D-ribulose 5-phosphate. The protein operates within carbohydrate degradation; pentose phosphate pathway; D-ribose 5-phosphate from D-ribulose 5-phosphate (non-oxidative stage): step 1/1. Its function is as follows. Catalyzes the reversible conversion of ribose-5-phosphate to ribulose 5-phosphate. The protein is Ribose-5-phosphate isomerase A of Streptococcus pneumoniae serotype 2 (strain D39 / NCTC 7466).